The sequence spans 403 residues: S-arrestin (403 aa).

The interval 11-19 (HVIFKKVSR) is interaction with RHO. Thr-231 is subject to Phosphothreonine. Residues 381–403 (RQNLKDTGENTEGKKDEDAGQDE) form a disordered region.

It belongs to the arrestin family. In terms of assembly, monomer. Homodimer. Homotetramer. Interacts with RHO (via the phosphorylated C-terminus). Detected in retina (at protein level).

Its subcellular location is the cell projection. The protein resides in the cilium. It localises to the photoreceptor outer segment. The protein localises to the membrane. Binds to photoactivated, phosphorylated RHO and terminates RHO signaling via G-proteins by competing with G-proteins for the same binding site on RHO. May play a role in preventing light-dependent degeneration of retinal photoreceptor cells. This chain is S-arrestin (Sag), found in Mus musculus (Mouse).